The following is a 356-amino-acid chain: S-adenosylmethionine:tRNA ribosyltransferase-isomerase (356 aa).

Belongs to the QueA family. Monomer.

It is found in the cytoplasm. It catalyses the reaction 7-aminomethyl-7-carbaguanosine(34) in tRNA + S-adenosyl-L-methionine = epoxyqueuosine(34) in tRNA + adenine + L-methionine + 2 H(+). It participates in tRNA modification; tRNA-queuosine biosynthesis. Transfers and isomerizes the ribose moiety from AdoMet to the 7-aminomethyl group of 7-deazaguanine (preQ1-tRNA) to give epoxyqueuosine (oQ-tRNA). This Histophilus somni (strain 2336) (Haemophilus somnus) protein is S-adenosylmethionine:tRNA ribosyltransferase-isomerase.